A 205-amino-acid polypeptide reads, in one-letter code: Large ribosomal subunit protein uL4 (205 aa).

The tract at residues 44 to 77 is disordered; the sequence is KRQGTSKVKNRSAVRGGGKKPWRQKGTGRARQGS. Positions 51-71 are enriched in basic residues; that stretch reads VKNRSAVRGGGKKPWRQKGTG.

This sequence belongs to the universal ribosomal protein uL4 family. As to quaternary structure, part of the 50S ribosomal subunit.

Its function is as follows. One of the primary rRNA binding proteins, this protein initially binds near the 5'-end of the 23S rRNA. It is important during the early stages of 50S assembly. It makes multiple contacts with different domains of the 23S rRNA in the assembled 50S subunit and ribosome. In terms of biological role, forms part of the polypeptide exit tunnel. The polypeptide is Large ribosomal subunit protein uL4 (Lactobacillus delbrueckii subsp. bulgaricus (strain ATCC 11842 / DSM 20081 / BCRC 10696 / JCM 1002 / NBRC 13953 / NCIMB 11778 / NCTC 12712 / WDCM 00102 / Lb 14)).